The following is a 141-amino-acid chain: Lutropin subunit beta (141 aa).

An N-terminal signal peptide occupies residues 1–20 (MERLQGLLLWLLLSPSVVWA). 5 disulfides stabilise this stretch: Cys-29-Cys-77, Cys-43-Cys-92, Cys-54-Cys-108, Cys-58-Cys-110, and Cys-113-Cys-120. A glycan (N-linked (GlcNAc...) asparagine) is linked at Asn-33.

This sequence belongs to the glycoprotein hormones subunit beta family. As to quaternary structure, heterodimer of a common alpha chain and a unique beta chain which confers biological specificity to thyrotropin, lutropin, follitropin and gonadotropin.

The protein resides in the secreted. Promotes spermatogenesis and ovulation by stimulating the testes and ovaries to synthesize steroids. The polypeptide is Lutropin subunit beta (Lhb) (Mus musculus (Mouse)).